We begin with the raw amino-acid sequence, 60 residues long: MDARLLDILVCPICKGPLEHDKKAQELICKADKLAYPIRDGIPIMWADQARDLQVTPGTN.

It belongs to the UPF0434 family.

This is UPF0434 protein mma_2578 from Janthinobacterium sp. (strain Marseille) (Minibacterium massiliensis).